The primary structure comprises 315 residues: MSLPIVYIDGDQGTTGLQIHERLRDRTDLRLVTLPDAERKDPARRAEAINASDIAILCLPDAAAREAVGFIRNPAVRVIDASSAHRTEPDWVYGFPEMVDGHAQTIAHARRVTNPGCYPTGAVGLLRPLQQAGLLPRDYPVCIHAVSGYSGGGRAAVDAFESNGAARAQPLQVYGLALAHKHVPEIQLHAGLAHRPLFVPAYGAYRQGIVLTVPIELRLLPAGVTGEALHACLAHHYAGARRVEVTPLADTRAITHLDPQALNGSNDLRLSVFVNAEHGQVLLAAVFDNLGKGASGAAVQNLDLMLGVASAVKAA.

Residue Cys-117 is part of the active site.

It belongs to the NAGSA dehydrogenase family. Type 2 subfamily.

The protein localises to the cytoplasm. The enzyme catalyses N-acetyl-L-glutamate 5-semialdehyde + phosphate + NADP(+) = N-acetyl-L-glutamyl 5-phosphate + NADPH + H(+). It participates in amino-acid biosynthesis; L-arginine biosynthesis; N(2)-acetyl-L-ornithine from L-glutamate: step 3/4. Its function is as follows. Catalyzes the NADPH-dependent reduction of N-acetyl-5-glutamyl phosphate to yield N-acetyl-L-glutamate 5-semialdehyde. This Burkholderia ambifaria (strain ATCC BAA-244 / DSM 16087 / CCUG 44356 / LMG 19182 / AMMD) (Burkholderia cepacia (strain AMMD)) protein is N-acetyl-gamma-glutamyl-phosphate reductase.